A 2158-amino-acid chain; its full sequence is Non-reducing polyketide synthase Preu8 (2158 aa).

The N-terminal acylcarrier protein transacylase domain (SAT) stretch occupies residues 4 to 241 (LVLGDQVADH…TPIPVFAPYH (238 aa)). One can recognise a Ketosynthase family 3 (KS3) domain in the interval 369–801 (NDKIAIVGMS…GGNTAIILED (433 aa)). Catalysis depends on for beta-ketoacyl synthase activity residues Cys541, His676, and His719. Residues 900–1215 (FTFTGQGSQY…ANSVSTLFLA (316 aa)) are malonyl-CoA:ACP transacylase (MAT) domain. Ser989 acts as the For acyl/malonyl transferase activity in catalysis. Residues 1285-1603 (SCQRIVREEL…RRVLNIMMPP (319 aa)) are product template (PT) domain. Positions 1287–1423 (QRIVREELHA…GTVKYEDVSQ (137 aa)) are N-terminal hotdog fold. A PKS/mFAS DH domain is found at 1287-1598 (QRIVREELHA…FQNIARRVLN (312 aa)). His1319 serves as the catalytic Proton acceptor; for dehydratase activity. Positions 1451–1598 (AHKVLRGMAY…FQNIARRVLN (148 aa)) are C-terminal hotdog fold. The Proton donor; for dehydratase activity role is filled by Asp1511. Residues 1619–1639 (KKAASPTLAPAKAAKPAAKTS) are compositionally biased toward low complexity. The tract at residues 1619–1654 (KKAASPTLAPAKAAKPAAKTSKPSKARAKPAADSTT) is disordered. Residues 1651–1725 (DSTTSRVMKI…QMKKFFSQYD (75 aa)) form the Carrier 1 domain. Ser1685 carries the post-translational modification O-(pantetheine 4'-phosphoryl)serine. Residues 1723–1779 (QYDGAPIPDDGDDSDGTDEPSNFSTPSYGADNASTPPSSAPSVNGKSSPENHEVLES) form a disordered region. Residues 1731 to 1740 (DDGDDSDGTD) are compositionally biased toward acidic residues. Polar residues predominate over residues 1743–1770 (SNFSTPSYGADNASTPPSSAPSVNGKSS). In terms of domain architecture, Carrier 2 spans 1779-1853 (STEVSLARKI…DIENELGMRP (75 aa)). O-(pantetheine 4'-phosphoryl)serine is present on Ser1813. The segment at 1847–1879 (NELGMRPKPKPKAEAAPPKSSAKASPSANKQPQ) is disordered. Residues 1860–1876 (EAAPPKSSAKASPSANK) show a composition bias toward low complexity. Positions 1894 to 2144 (SQYPPANSVL…NHFTMMKGDH (251 aa)) are thioesterase (TE) domain.

The cofactor is pantetheine 4'-phosphate.

In terms of biological role, non-reducing polyketide synthase; part of a gene cluster that mediates the biosynthesis of a yet unidentified natural product. The chain is Non-reducing polyketide synthase Preu8 from Preussia isomera (Coprophilous fungus).